The chain runs to 446 residues: SWI/SNF chromatin-remodeling accessory subunit 1 (446 aa).

The disordered stretch occupies residues 1 to 53; that stretch reads MQTQARPPVPQGPRFNHPATPQQVRRPINAPLPGQTAQIQGNRGPQPPKKKKR. Positions 220–297 constitute an SWIB/MDM2 domain; that stretch reads YQPMKFKLHP…PQRLHQLLQQ (78 aa).

This sequence belongs to the SMARCD family. Component of the multiprotein chromatin-remodeling complexes SWI/SNF: SWI/SNF-A (BAF), SWI/SNF-B (PBAF) and related complexes. The canonical complex contains a catalytic subunit swsn-4, core subunits swsn-1 and swsn-5, and accessory subunits swsn-3, swsn-6, phf-10, dpff-1, swsn-9 and either ham-3/swsn-2.1 or swsn-2.2. May interact with blmp-1. As to expression, broadly expressed in all cell types.

The protein localises to the nucleus. In terms of biological role, involved in transcriptional activation and repression of select genes by chromatin remodeling (alteration of DNA-nucleosome topology). Component of SWI/SNF chromatin remodeling complexes that carry out key enzymatic activities, changing chromatin structure by altering DNA-histone contacts within a nucleosome in an ATP-dependent manner. Required for the blmp-1-mediated transcriptional activation or repression of several hypodermal genes such as bed-3. Involved in regulating differentiation, migration and axon pathfinding of specific serotonergic neurons (HSNs). Probably regulates vulva development through the let-60/Ras pathway. May be involved in regulation of developmental processes in the embryo driven by the Wnt pathway. Involved in gonadogenesis. In Caenorhabditis elegans, this protein is SWI/SNF chromatin-remodeling accessory subunit 1.